The primary structure comprises 467 residues: Glutamate--tRNA ligase (467 aa).

Positions 14 to 24 match the 'HIGH' region motif; the sequence is PSPTGFLHLGG. A compositionally biased stretch (basic and acidic residues) spans 124-134; sequence PRYDGTWRPEP. Positions 124–156 are disordered; sequence PRYDGTWRPEPGKTLPPVPAGRKPVVRFKNPQD. A 'KMSKS' region motif is present at residues 246–250; sequence KLSKR. Residue lysine 249 coordinates ATP.

This sequence belongs to the class-I aminoacyl-tRNA synthetase family. Glutamate--tRNA ligase type 1 subfamily. In terms of assembly, monomer.

Its subcellular location is the cytoplasm. The enzyme catalyses tRNA(Glu) + L-glutamate + ATP = L-glutamyl-tRNA(Glu) + AMP + diphosphate. Its function is as follows. Catalyzes the attachment of glutamate to tRNA(Glu) in a two-step reaction: glutamate is first activated by ATP to form Glu-AMP and then transferred to the acceptor end of tRNA(Glu). In Bordetella petrii (strain ATCC BAA-461 / DSM 12804 / CCUG 43448), this protein is Glutamate--tRNA ligase.